Consider the following 535-residue polypeptide: Nuclear/nucleolar GTPase 2 (535 aa).

A disordered region spans residues M1–S42. Positions H17–G29 are enriched in basic and acidic residues. Over residues A30–R41 the composition is skewed to gly residues. The region spanning W213–Q374 is the CP-type G domain. A G4 region spans residues N261–D264. The segment at S290–N292 is G5. Residues G323–S330 are G1. A G2 region spans residues G349–V353. The tract at residues D367–G370 is G3. The tract at residues F464–R495 is disordered.

It belongs to the TRAFAC class YlqF/YawG GTPase family. RsgA subfamily.

It localises to the nucleus. The protein resides in the nucleolus. Functionally, GTPase involved in pre-60S ribosomal subunit maturation. The polypeptide is Nuclear/nucleolar GTPase 2 (Oryza sativa subsp. indica (Rice)).